A 601-amino-acid polypeptide reads, in one-letter code: AT-rich interactive domain-containing protein 3A (601 aa).

Positions 1 to 224 are disordered; it reads MKLQAVMETL…HMASQMPPPD (224 aa). A compositionally biased stretch (low complexity) spans 60–89; the sequence is MAALAAMRAAAAGLGHPSSPGGSEDGPPIS. A phosphoserine mark is found at Ser-78, Ser-82, and Ser-89. Thr-99 is modified (phosphothreonine). Ser-102 is modified (phosphoserine). Basic and acidic residues predominate over residues 114–123; that stretch reads GHAEGDRHLM. Ser-127 is modified (phosphoserine). The acidic stretch occupies residues 128-165; it reads DDDDTKSKWEEQELEELGEEEEEEEEEDDFEEEEEEEE. The segment covering 139–166 has biased composition (acidic residues); that stretch reads QELEELGEEEEEEEEEDDFEEEEEEEEG. The region spanning 243 to 335 is the ARID domain; sequence DPKRKEFLDD…YLYPYECERR (93 aa). 2 positions are modified to phosphoserine: Ser-358 and Ser-367. Residues Lys-403, Lys-404, Lys-457, and Lys-467 each participate in a glycyl lysine isopeptide (Lys-Gly) (interchain with G-Cter in SUMO2) cross-link. The 98-residue stretch at 449 to 546 folds into the REKLES domain; it reads AALEQLREKL…GVLFAQPPPP (98 aa). An important for nuclear localization region spans residues 450-493; sequence ALEQLREKLESTEPPEKKMALVADEQQRLMQRAVQQSFLAMTAQ. The segment at 495-518 is homodimerization; that stretch reads PMNIRINSQASESRQDSAVSLTSA. Positions 542 to 562 are important for cytoplasmic localization; that stretch reads QPPPPTAPSAPGKGGVSSIGT. A disordered region spans residues 545 to 601; sequence PPTAPSAPGKGGVSSIGTNTTTGSRTGASGSTVSGGQVGLPGVSTPTMSSTSNNSLP. 2 stretches are compositionally biased toward low complexity: residues 559-579 and 588-601; these read SIGT…TVSG and STPT…NSLP.

As to quaternary structure, homodimer. Heterodimer with ARID3B. Interacts with E2F1. Interacts with GTF2I and BTK. As to expression, B-cell specific in the adult. Expressed in B-cell progenitors, down-regulated in the immature B-cell stage, and is up-regulated again at later stages of B-lymphocyte differentiation.

Its subcellular location is the nucleus. The protein resides in the cytoplasm. Its function is as follows. Transcription factor involved in B-cell differentiation. Binds a VH promoter proximal site necessary for induced mu-heavy-chain transcription. Binds the minor groove of a restricted ATC sequence that is sufficient for nuclear matrix association. This sequence motif is present in matrix-associating regions (MARS) proximal to the promoter and flanking E mu. Activates E mu-driven transcription by binding these sites. May be involved in the control of cell cycle progression by the RB1/E2F1 pathway. The polypeptide is AT-rich interactive domain-containing protein 3A (Arid3a) (Mus musculus (Mouse)).